Here is a 153-residue protein sequence, read N- to C-terminus: Endoribonuclease YbeY (153 aa).

Zn(2+) contacts are provided by His114, His118, and His124.

It belongs to the endoribonuclease YbeY family. Zn(2+) is required as a cofactor.

Its subcellular location is the cytoplasm. Its function is as follows. Single strand-specific metallo-endoribonuclease involved in late-stage 70S ribosome quality control and in maturation of the 3' terminus of the 16S rRNA. This Shewanella sp. (strain MR-4) protein is Endoribonuclease YbeY.